The sequence spans 88 residues: Small ribosomal subunit protein bS16c (88 aa).

This sequence belongs to the bacterial ribosomal protein bS16 family.

It is found in the plastid. The protein resides in the chloroplast. The protein is Small ribosomal subunit protein bS16c of Solanum bulbocastanum (Wild potato).